Reading from the N-terminus, the 401-residue chain is Sodium/glutamate symporter (401 aa).

Topologically, residues 1–6 (MFHLDT) are periplasmic. A helical membrane pass occupies residues 7 to 24 (LATLVAATLTLLLGRKLV). The Cytoplasmic segment spans residues 25 to 32 (HSVSFLKK). A helical membrane pass occupies residues 33–52 (YTIPEPVAGGLLVALALLVL). The Periplasmic portion of the chain corresponds to 53 to 69 (KKSMGWEVNFDMSLRDP). The helical transmembrane segment at 70-87 (LMLAFFATIGLNANIASL) threads the bilayer. The Cytoplasmic segment spans residues 88–93 (RAGGRV). The helical transmembrane segment at 94–116 (VGIFLIVVVGLLVMQNAIGIGMA) threads the bilayer. The Periplasmic segment spans residues 117–156 (SLLGLDPLMGLLAGSITLSGGHGTGAAWSKLFIERYGFTN). Residues 157-179 (ATEVAMACATFGLVLGGLIGGPV) form a helical membrane-spanning segment. Topologically, residues 180–212 (ARYLVKHSTTPNGIPDDQEVPTAFEKPDVGRMI) are cytoplasmic. The helical transmembrane segment at 213–235 (TSLVLIETIALIAICLTVGKIVA) threads the bilayer. Over 236–244 (QLLAGTAFE) the chain is Periplasmic. Residues 245–267 (LPTFVCVLFVGVILSNGLSIMGF) traverse the membrane as a helical segment. Residues 268–276 (YRVFERAVS) lie on the Cytoplasmic side of the membrane. The helical transmembrane segment at 277-292 (VLGNVSLSLFLAMALM) threads the bilayer. The Periplasmic portion of the chain corresponds to 293 to 301 (GLKLWELAS). The chain crosses the membrane as a helical span at residues 302-324 (LALPMLAILVVQTIFMALYAIFV). Topologically, residues 325-367 (TWRMMGKNYDAAVLAAGHCGFGLGATPTAIANMQAITERFGPS) are cytoplasmic. A helical membrane pass occupies residues 368–390 (HMAFLVVPMVGAFFIDIVNALVI). Residues 391 to 401 (KLYLMLPIFAG) are Periplasmic-facing.

It belongs to the glutamate:Na(+) symporter (ESS) (TC 2.A.27) family.

It is found in the cell inner membrane. Its activity is regulated as follows. Inhibited by the uncoupler carbonylcyanide m-chlorophenylhydrazone (CCCP) and the ionophore monensin. In terms of biological role, catalyzes the sodium-dependent, binding-protein-independent transport of glutamate. This is Sodium/glutamate symporter from Escherichia coli (strain K12).